The chain runs to 844 residues: Janus kinase and microtubule-interacting protein 3 (844 aa).

A coiled-coil region spans residues 8–258 (SRAKGDKAEA…QLSQVREADR (251 aa)). The disordered stretch occupies residues 250–290 (LSQVREADRHPGSPRRELPHAAGAGDASDHSGSPEQQLDEK). The span at 254 to 268 (READRHPGSPRRELP) shows a compositional bias: basic and acidic residues. Positions 269-282 (HAAGAGDASDHSGS) are enriched in low complexity. Residues 289–421 (EKDARRFQLK…DELSKTLETA (133 aa)) are a coiled coil. S384 is subject to Phosphoserine. Over residues 466–483 (SDGSSVSYQTDRTDQTPC) the composition is skewed to polar residues. The disordered stretch occupies residues 466–489 (SDGSSVSYQTDRTDQTPCTPDDDL). Coiled-coil stretches lie at residues 493–621 (MAKE…RERK) and 683–834 (VLTL…FLFL).

This sequence belongs to the JAKMIP family. Specifically expressed in the CNS and endocrine tissues. Also detected in other tissues including heart, testis and prostate.

The protein resides in the golgi apparatus. The sequence is that of Janus kinase and microtubule-interacting protein 3 (JAKMIP3) from Homo sapiens (Human).